A 119-amino-acid chain; its full sequence is Ribonuclease P protein component (119 aa).

It belongs to the RnpA family. Consists of a catalytic RNA component (M1 or rnpB) and a protein subunit.

The catalysed reaction is Endonucleolytic cleavage of RNA, removing 5'-extranucleotides from tRNA precursor.. Functionally, RNaseP catalyzes the removal of the 5'-leader sequence from pre-tRNA to produce the mature 5'-terminus. It can also cleave other RNA substrates such as 4.5S RNA. The protein component plays an auxiliary but essential role in vivo by binding to the 5'-leader sequence and broadening the substrate specificity of the ribozyme. This chain is Ribonuclease P protein component, found in Aeromonas hydrophila subsp. hydrophila (strain ATCC 7966 / DSM 30187 / BCRC 13018 / CCUG 14551 / JCM 1027 / KCTC 2358 / NCIMB 9240 / NCTC 8049).